The following is a 544-amino-acid chain: CTP synthase (544 aa).

The interval 1–267 (MSKFIFVTGG…GDLLVSRLHL (267 aa)) is amidoligase domain. S13 provides a ligand contact to CTP. S13 serves as a coordination point for UTP. 14–19 (SVGKGI) contributes to the ATP binding site. Y54 is an L-glutamine binding site. D71 is an ATP binding site. Mg(2+) is bound by residues D71 and E141. CTP is bound by residues 148-150 (DIE), 188-193 (KTKPTQ), and K224. UTP is bound by residues 188–193 (KTKPTQ) and K224. In terms of domain architecture, Glutamine amidotransferase type-1 spans 299-534 (YVELKDAYYS…INAAKKVIRD (236 aa)). G354 lines the L-glutamine pocket. The active-site Nucleophile; for glutamine hydrolysis is C381. L-glutamine-binding positions include 382–385 (LGMQ), E405, and R462. Residues H507 and E509 contribute to the active site.

Belongs to the CTP synthase family. As to quaternary structure, homotetramer.

The catalysed reaction is UTP + L-glutamine + ATP + H2O = CTP + L-glutamate + ADP + phosphate + 2 H(+). It catalyses the reaction L-glutamine + H2O = L-glutamate + NH4(+). The enzyme catalyses UTP + NH4(+) + ATP = CTP + ADP + phosphate + 2 H(+). Its pathway is pyrimidine metabolism; CTP biosynthesis via de novo pathway; CTP from UDP: step 2/2. Its activity is regulated as follows. Allosterically activated by GTP, when glutamine is the substrate; GTP has no effect on the reaction when ammonia is the substrate. The allosteric effector GTP functions by stabilizing the protein conformation that binds the tetrahedral intermediate(s) formed during glutamine hydrolysis. Inhibited by the product CTP, via allosteric rather than competitive inhibition. Functionally, catalyzes the ATP-dependent amination of UTP to CTP with either L-glutamine or ammonia as the source of nitrogen. Regulates intracellular CTP levels through interactions with the four ribonucleotide triphosphates. This chain is CTP synthase, found in Dehalococcoides mccartyi (strain ATCC BAA-2100 / JCM 16839 / KCTC 5957 / BAV1).